The following is a 346-amino-acid chain: Elongation factor Ts (346 aa).

Positions 80 to 83 are involved in Mg(2+) ion dislocation from EF-Tu; sequence TDFV.

It belongs to the EF-Ts family.

The protein resides in the cytoplasm. Its function is as follows. Associates with the EF-Tu.GDP complex and induces the exchange of GDP to GTP. It remains bound to the aminoacyl-tRNA.EF-Tu.GTP complex up to the GTP hydrolysis stage on the ribosome. In Streptococcus pneumoniae serotype 19F (strain G54), this protein is Elongation factor Ts.